The primary structure comprises 630 residues: MNASSKRKIISQSEISKKIAVMNEEMQGFWANNSWDIRKCPHPSAIELSKNPALRNRWVRFERVKNLWLRTELKYFYFYHLNNGIWNAKTVWIRKGTVINKMLDFLDLKYPSITSITEVPIEKAMTEYRTYLTKRGVRITTTNYKITANQEKTPVKANSYYVTNLKQFMEFYENFYFDGEEWDKDVWDRRNLPLPDDKVNPTQYEYTINFKGFRNTYFKQLVKRYCKLRLNVDSFSYVSDIAQRLKEFFNFLDMKFKQVQRVHQLTRVEIEAYLSELNMMGIKPSTITGRISILEGLFSTLLRLEWDDVPSKILIYSEDYPKIPRAKPRFIDEFVLEQLNSHLDKLPEYIATMTMIVQECGMRISELCTLKKGCLLEDKDGDFFLKYYQWKMKKEHIVPISKEVALLIKVREDKVSEEFPDSEYLFPRKDGSPLKQETFRGELNKLAYEQNIVDKSGEIYRFHAHAFRHTVGTRMINNGMPQHIVQKFLGHESPEMTSRYAHIFDETLKNEFTKFQEKLVTNNGDVLDLDEDNEVDDVELQWFKKNINAQVLPNGYCRLPVVAGGCPHANACLDCTHFCTSKQFLPQHEEQLERTEELLAIAKDKQWQRQVETNSRVKERLEQIIGSLTG.

The Core-binding (CB) domain occupies 216-302; it reads TYFKQLVKRY…ILEGLFSTLL (87 aa). Residues 326–513 form the Tyr recombinase domain; the sequence is AKPRFIDEFV…FDETLKNEFT (188 aa). Residues R363, K391, H465, R468, and H491 contribute to the active site. Y500 serves as the catalytic O-(3'-phospho-DNA)-tyrosine intermediate.

This sequence belongs to the 'phage' integrase family.

Its function is as follows. One of three proteins encoded by transposon Tn554 required for its transposition. This is Transposase B from transposon Tn554 (tnpB1) from Staphylococcus aureus (strain Mu50 / ATCC 700699).